The following is a 602-amino-acid chain: Elongation factor 4 (602 aa).

The tr-type G domain occupies 8–189 (KNIRNFSIIA…KIITTIPAPS (182 aa)). GTP is bound by residues 20–25 (DHGKST) and 136–139 (NKID).

This sequence belongs to the TRAFAC class translation factor GTPase superfamily. Classic translation factor GTPase family. LepA subfamily.

Its subcellular location is the cell inner membrane. It carries out the reaction GTP + H2O = GDP + phosphate + H(+). Its function is as follows. Required for accurate and efficient protein synthesis under certain stress conditions. May act as a fidelity factor of the translation reaction, by catalyzing a one-codon backward translocation of tRNAs on improperly translocated ribosomes. Back-translocation proceeds from a post-translocation (POST) complex to a pre-translocation (PRE) complex, thus giving elongation factor G a second chance to translocate the tRNAs correctly. Binds to ribosomes in a GTP-dependent manner. This chain is Elongation factor 4, found in Helicobacter pylori (strain HPAG1).